The following is a 102-amino-acid chain: Protein Tat (102 aa).

Residues Met-1–Pro-10 show a composition bias toward basic and acidic residues. The disordered stretch occupies residues Met-1 to Thr-20. An interaction with human CREBBP region spans residues Met-1 to Lys-24. The segment at Met-1–Gly-48 is transactivation. Positions 22, 25, and 27 each coordinate Zn(2+). A cysteine-rich region spans residues Cys-22–Cys-37. Position 28 is an N6-acetyllysine; by host PCAF (Lys-28). Cys-30, His-33, Cys-34, and Cys-37 together coordinate Zn(2+). The core stretch occupies residues Phe-38–Gly-48. The interval Tyr-47–Asp-102 is disordered. Over residues Gly-48–Lys-60 the composition is skewed to basic residues. A Nuclear localization signal, RNA-binding (TAR), and protein transduction motif is present at residues Arg-49–Arg-57. The interaction with the host capping enzyme RNGTT stretch occupies residues Arg-49 to Lys-87. Residues Lys-50 and Lys-51 each carry the N6-acetyllysine; by host EP300 and GCN5L2 modification. Arg-52 is subject to Asymmetric dimethylarginine; by host PRMT6. Residues Leu-74 to Gln-85 show a composition bias toward polar residues. Over residues Lys-90–Asp-102 the composition is skewed to basic and acidic residues.

It belongs to the lentiviruses Tat family. In terms of assembly, interacts with host CCNT1. Associates with the P-TEFb complex composed at least of Tat, P-TEFb (CDK9 and CCNT1), TAR RNA, RNA Pol II. Recruits the HATs CREBBP, TAF1/TFIID, EP300, PCAF and GCN5L2. Interacts with host KAT5/Tip60; this interaction targets the latter to degradation. Interacts with the host deacetylase SIRT1. Interacts with host capping enzyme RNGTT; this interaction stimulates RNGTT. Binds to host KDR, and to the host integrins ITGAV/ITGB3 and ITGA5/ITGB1. Interacts with host KPNB1/importin beta-1 without previous binding to KPNA1/importin alpha-1. Interacts with EIF2AK2. Interacts with host nucleosome assembly protein NAP1L1; this interaction may be required for the transport of Tat within the nucleus, since the two proteins interact at the nuclear rim. Interacts with host C1QBP/SF2P32; this interaction involves lysine-acetylated Tat. Interacts with the host chemokine receptors CCR2, CCR3 and CXCR4. Interacts with host DPP4/CD26; this interaction may trigger an anti-proliferative effect. Interacts with host LDLR. Interacts with the host extracellular matrix metalloproteinase MMP1. Interacts with host PRMT6; this interaction mediates Tat's methylation. Interacts with, and is ubiquitinated by MDM2/Hdm2. Interacts with host PSMC3 and HTATIP2. Interacts with STAB1; this interaction may overcome SATB1-mediated repression of IL2 and IL2RA (interleukin) in T cells by binding to the same domain than HDAC1. Interacts (when acetylated) with human CDK13, thereby increasing HIV-1 mRNA splicing and promoting the production of the doubly spliced HIV-1 protein Nef. Interacts with host TBP; this interaction modulates the activity of transcriptional pre-initiation complex. Interacts with host RELA. Interacts with host PLSCR1; this interaction negatively regulates Tat transactivation activity by altering its subcellular distribution. In terms of processing, asymmetrical arginine methylation by host PRMT6 seems to diminish the transactivation capacity of Tat and affects the interaction with host CCNT1. Post-translationally, acetylation by EP300, CREBBP, GCN5L2/GCN5 and PCAF regulates the transactivation activity of Tat. EP300-mediated acetylation of Lys-50 promotes dissociation of Tat from the TAR RNA through the competitive binding to PCAF's bromodomain. In addition, the non-acetylated Tat's N-terminus can also interact with PCAF. PCAF-mediated acetylation of Lys-28 enhances Tat's binding to CCNT1. Lys-50 is deacetylated by SIRT1. Polyubiquitination by host MDM2 does not target Tat to degradation, but activates its transactivation function and fosters interaction with CCNT1 and TAR RNA. In terms of processing, phosphorylated by EIF2AK2 on serine and threonine residues adjacent to the basic region important for TAR RNA binding and function. Phosphorylation of Tat by EIF2AK2 is dependent on the prior activation of EIF2AK2 by dsRNA.

It is found in the host nucleus. The protein resides in the host nucleolus. It localises to the host cytoplasm. The protein localises to the secreted. Transcriptional activator that increases RNA Pol II processivity, thereby increasing the level of full-length viral transcripts. Recognizes a hairpin structure at the 5'-LTR of the nascent viral mRNAs referred to as the transactivation responsive RNA element (TAR) and recruits the cyclin T1-CDK9 complex (P-TEFb complex) that will in turn hyperphosphorylate the RNA polymerase II to allow efficient elongation. The CDK9 component of P-TEFb and other Tat-activated kinases hyperphosphorylate the C-terminus of RNA Pol II that becomes stabilized and much more processive. Other factors such as HTATSF1/Tat-SF1, SUPT5H/SPT5, and HTATIP2 are also important for Tat's function. Besides its effect on RNA Pol II processivity, Tat induces chromatin remodeling of proviral genes by recruiting the histone acetyltransferases (HATs) CREBBP, EP300 and PCAF to the chromatin. This also contributes to the increase in proviral transcription rate, especially when the provirus integrates in transcriptionally silent region of the host genome. To ensure maximal activation of the LTR, Tat mediates nuclear translocation of NF-kappa-B by interacting with host RELA. Through its interaction with host TBP, Tat may also modulate transcription initiation. Tat can reactivate a latently infected cell by penetrating in it and transactivating its LTR promoter. In the cytoplasm, Tat is thought to act as a translational activator of HIV-1 mRNAs. Its function is as follows. Extracellular circulating Tat can be endocytosed by surrounding uninfected cells via the binding to several surface receptors such as CD26, CXCR4, heparan sulfate proteoglycans (HSPG) or LDLR. Neurons are rarely infected, but they internalize Tat via their LDLR. Through its interaction with nuclear HATs, Tat is potentially able to control the acetylation-dependent cellular gene expression. Modulates the expression of many cellular genes involved in cell survival, proliferation or in coding for cytokines or cytokine receptors. Tat plays a role in T-cell and neurons apoptosis. Tat induced neurotoxicity and apoptosis probably contribute to neuroAIDS. Circulating Tat also acts as a chemokine-like and/or growth factor-like molecule that binds to specific receptors on the surface of the cells, affecting many cellular pathways. In the vascular system, Tat binds to ITGAV/ITGB3 and ITGA5/ITGB1 integrins dimers at the surface of endothelial cells and competes with bFGF for heparin-binding sites, leading to an excess of soluble bFGF. This Human immunodeficiency virus type 1 group N (isolate YBF106) (HIV-1) protein is Protein Tat.